The sequence spans 570 residues: Protein HEATR9 (570 aa).

The protein is Protein HEATR9 (HEATR9) of Macaca fascicularis (Crab-eating macaque).